A 313-amino-acid polypeptide reads, in one-letter code: tRNA-cytidine(32) 2-sulfurtransferase (313 aa).

The short motif at 47 to 52 (SGGKDS) is the PP-loop motif element. Positions 122, 125, and 213 each coordinate [4Fe-4S] cluster.

This sequence belongs to the TtcA family. In terms of assembly, homodimer. Mg(2+) serves as cofactor. Requires [4Fe-4S] cluster as cofactor.

It localises to the cytoplasm. It catalyses the reaction cytidine(32) in tRNA + S-sulfanyl-L-cysteinyl-[cysteine desulfurase] + AH2 + ATP = 2-thiocytidine(32) in tRNA + L-cysteinyl-[cysteine desulfurase] + A + AMP + diphosphate + H(+). It functions in the pathway tRNA modification. Catalyzes the ATP-dependent 2-thiolation of cytidine in position 32 of tRNA, to form 2-thiocytidine (s(2)C32). The sulfur atoms are provided by the cysteine/cysteine desulfurase (IscS) system. This is tRNA-cytidine(32) 2-sulfurtransferase from Yersinia enterocolitica serotype O:8 / biotype 1B (strain NCTC 13174 / 8081).